Consider the following 324-residue polypeptide: HTH-type transcriptional regulator GlxA (324 aa).

The 99-residue stretch at 223–321 (LAVLEKMETA…SQTPGSLRRR (99 aa)) folds into the HTH araC/xylS-type domain. 2 DNA-binding regions (H-T-H motif) span residues 240-261 (TAMARLAGVSPRHLDRLFREHR) and 288-311 (IPEIAYATGFSSPAHFSNAFKRLF).

This Rhizobium meliloti (strain 1021) (Ensifer meliloti) protein is HTH-type transcriptional regulator GlxA (glxA).